The following is a 372-amino-acid chain: RNA polymerase sigma factor SigA (372 aa).

The tract at residues 139-209 is sigma-70 factor domain-2; it reads LAEANLRLVV…TRAIADQART (71 aa). An Interaction with polymerase core subunit RpoC motif is present at residues 163–166; it reads DLIQ. The interval 218–294 is sigma-70 factor domain-3; sequence ETINKLIRVQ…DQDALAPSDA (77 aa). Residues 307–360 are sigma-70 factor domain-4; it reads VLDTLTDREENVLRLRFGLDDGRTRTLEEVGKVFGVTRERIRQIEAKALRKLRH. Residues 333–352 constitute a DNA-binding region (H-T-H motif); that stretch reads LEEVGKVFGVTRERIRQIEA.

This sequence belongs to the sigma-70 factor family. RpoD/SigA subfamily. Interacts transiently with the RNA polymerase catalytic core.

Its subcellular location is the cytoplasm. Functionally, sigma factors are initiation factors that promote the attachment of RNA polymerase to specific initiation sites and are then released. This sigma factor is the primary sigma factor during exponential growth. This chain is RNA polymerase sigma factor SigA, found in Halalkalibacterium halodurans (strain ATCC BAA-125 / DSM 18197 / FERM 7344 / JCM 9153 / C-125) (Bacillus halodurans).